We begin with the raw amino-acid sequence, 594 residues long: A-type ATP synthase subunit A (594 aa).

An ATP-binding site is contributed by 236–243 (GPFGSGKT).

The protein belongs to the ATPase alpha/beta chains family. As to quaternary structure, has multiple subunits with at least A(3), B(3), C, D, E, F, H, I and proteolipid K(x).

It is found in the cell membrane. It carries out the reaction ATP + H2O + 4 H(+)(in) = ADP + phosphate + 5 H(+)(out). Component of the A-type ATP synthase that produces ATP from ADP in the presence of a proton gradient across the membrane. The A chain is the catalytic subunit. This Pyrobaculum calidifontis (strain DSM 21063 / JCM 11548 / VA1) protein is A-type ATP synthase subunit A.